The sequence spans 226 residues: Cytochrome c oxidase subunit 2 (226 aa).

The Mitochondrial intermembrane segment spans residues 1 to 25 (MNTWLLSLQNSNSPTYDMMIFFHDF). A helical membrane pass occupies residues 26-47 (TMMILIFITLLILFIMFTMINN). The Mitochondrial matrix segment spans residues 48–61 (NLINRFLLQGHFIE). A helical transmembrane segment spans residues 62 to 81 (LIWTITPMIILILIAIPSFK). At 82–226 (ILYLTDEMFN…YFKNWLKSFL (145 aa)) the chain is on the mitochondrial intermembrane side. 6 residues coordinate Cu cation: His160, Cys195, Glu197, Cys199, His203, and Met206. Glu197 provides a ligand contact to Mg(2+).

Belongs to the cytochrome c oxidase subunit 2 family. In terms of assembly, component of the cytochrome c oxidase (complex IV, CIV), a multisubunit enzyme composed of a catalytic core of 3 subunits and several supernumerary subunits. The complex exists as a monomer or a dimer and forms supercomplexes (SCs) in the inner mitochondrial membrane with ubiquinol-cytochrome c oxidoreductase (cytochrome b-c1 complex, complex III, CIII). Requires Cu cation as cofactor.

The protein localises to the mitochondrion inner membrane. It catalyses the reaction 4 Fe(II)-[cytochrome c] + O2 + 8 H(+)(in) = 4 Fe(III)-[cytochrome c] + 2 H2O + 4 H(+)(out). Functionally, component of the cytochrome c oxidase, the last enzyme in the mitochondrial electron transport chain which drives oxidative phosphorylation. The respiratory chain contains 3 multisubunit complexes succinate dehydrogenase (complex II, CII), ubiquinol-cytochrome c oxidoreductase (cytochrome b-c1 complex, complex III, CIII) and cytochrome c oxidase (complex IV, CIV), that cooperate to transfer electrons derived from NADH and succinate to molecular oxygen, creating an electrochemical gradient over the inner membrane that drives transmembrane transport and the ATP synthase. Cytochrome c oxidase is the component of the respiratory chain that catalyzes the reduction of oxygen to water. Electrons originating from reduced cytochrome c in the intermembrane space (IMS) are transferred via the dinuclear copper A center (CU(A)) of subunit 2 and heme A of subunit 1 to the active site in subunit 1, a binuclear center (BNC) formed by heme A3 and copper B (CU(B)). The BNC reduces molecular oxygen to 2 water molecules using 4 electrons from cytochrome c in the IMS and 4 protons from the mitochondrial matrix. The chain is Cytochrome c oxidase subunit 2 (COII) from Lasius sp.